The chain runs to 764 residues: Complement factor B (764 aa).

Positions 1–25 (MGSNLSPQLCLMPFILGLLSGGVTT) are cleaved as a signal peptide. Sushi domains lie at 35-100 (ESCS…ECRA), 101-160 (IHCP…ICDN), and 163-220 (GYCS…SCQD). 6 disulfide bridges follow: Cys37–Cys76, Cys62–Cys98, Cys103–Cys145, Cys131–Cys158, Cys165–Cys205, and Cys191–Cys218. N-linked (GlcNAc...) asparagine glycosylation is found at Asn122 and Asn142. In terms of domain architecture, VWFA spans 270–469 (NIYLVLDGSD…NLEDVFYQMI (200 aa)). The Mg(2+) site is built by Ser278 and Ser280. N-linked (GlcNAc...) asparagine glycosylation is present at Asn285. Thr353 lines the Mg(2+) pocket. A glycan (N-linked (GlcNAc...) asparagine) is linked at Asn378. Residues 477 to 757 (LCGMVWEHRK…VLPWLKEKLQ (281 aa)) form the Peptidase S1 domain. 5 disulfides stabilise this stretch: Cys478-Cys596, Cys511-Cys527, Cys599-Cys615, Cys656-Cys682, and Cys695-Cys725. Catalysis depends on charge relay system residues His526 and Asp576. Ser699 (charge relay system) is an active-site residue.

Belongs to the peptidase S1 family. In terms of assembly, monomer. Interacts with complement C3b; this interaction is dependent on the presence of Mg(2+). As to quaternary structure, catalytic component of the C3 convertase of the alternative complement pathway, also named C3bBb, composed of complement factor B Bb and complement C3b. Catalytic component of the C5 convertase of the alternative complement pathway, also named C3bBb3b, composed of complement factor B Bb and additional molecules of complement C3b. Interacts to CFP; this interaction contributes to the stabilization of the active C3-convertase enzyme complex. The cofactor is Mg(2+). It depends on Mn(2+) as a cofactor. Cleaved by CFD following activation of the alternative complement system, generating Ba and Bb chains. Cleavage and activation takes place when CFB is already associated with complement C3b.

Its subcellular location is the secreted. The protein localises to the cell surface. The enzyme catalyses Cleavage of Arg-|-Ser bond in complement component C3 alpha-chain to yield C3a and C3b, and Arg-|-Xaa bond in complement component C5 alpha-chain to yield C5a and C5b.. Functionally, precursor of the catalytic component of the C3 and C5 convertase complexes of the alternative pathway of the complement system, a cascade of proteins that leads to phagocytosis and breakdown of pathogens and signaling that strengthens the adaptive immune system. The alternative complement pathway acts as an amplification loop that enhances other complement pathways (classical, lectin and GZMK) by promoting formation of additional C3 and C5 convertases. CFB is cleaved and activated by CFD to generate Ba and Bb chains; Bb chain constituting the catalytic component of the C3 and C5 convertases. Its function is as follows. Serine protease component of the complement C3 and C5 convertase complexes of the alternative complement pathway. Following cleavage and activation by factor D (CFD), forms the C3 convertase together with complement C3b. As part of the C3 convertase, cleaves and activates C3 into C3a anaphylatoxin and C3b opsonin, the next components of the complement pathways. When an additional complement C3b molecule binds to the C3 convertase, forms the C5 convertase, which cleaves and activates C5 into C5a anaphylatoxin and C5b component of the membrane attack complex. In terms of biological role, involved in proliferation and differentiation of preactivated B-lymphocytes, rapid spreading of peripheral blood monocytes, stimulation of lymphocyte blastogenesis and lysis of erythrocytes. This chain is Complement factor B (CFB), found in Pan troglodytes (Chimpanzee).